Consider the following 52-residue polypeptide: UPF0391 membrane protein ACIAD3602 (52 aa).

2 helical membrane-spanning segments follow: residues 6–26 and 30–50; these read IIFA…VAGL and FAVI…ISRG.

This sequence belongs to the UPF0391 family.

The protein resides in the cell membrane. The polypeptide is UPF0391 membrane protein ACIAD3602 (Acinetobacter baylyi (strain ATCC 33305 / BD413 / ADP1)).